Reading from the N-terminus, the 209-residue chain is Thymidylate kinase (209 aa).

10-17 (GIDGCGKS) is an ATP binding site.

It belongs to the thymidylate kinase family.

It catalyses the reaction dTMP + ATP = dTDP + ADP. Phosphorylation of dTMP to form dTDP in both de novo and salvage pathways of dTTP synthesis. The sequence is that of Thymidylate kinase from Parasynechococcus marenigrum (strain WH8102).